The sequence spans 428 residues: Adenylosuccinate synthetase (428 aa).

GTP contacts are provided by residues G12–K18 and G40–T42. The Proton acceptor role is filled by D13. Residues D13 and G40 each contribute to the Mg(2+) site. Residues D13 to K16, N38 to H41, T129, R143, Q224, T239, and R303 contribute to the IMP site. The active-site Proton donor is H41. V299 to R305 is a binding site for substrate. GTP-binding positions include R305, K331 to D333, and A410 to G412.

The protein belongs to the adenylosuccinate synthetase family. Homodimer. Mg(2+) is required as a cofactor.

The protein resides in the cytoplasm. The enzyme catalyses IMP + L-aspartate + GTP = N(6)-(1,2-dicarboxyethyl)-AMP + GDP + phosphate + 2 H(+). Its pathway is purine metabolism; AMP biosynthesis via de novo pathway; AMP from IMP: step 1/2. In terms of biological role, plays an important role in the de novo pathway of purine nucleotide biosynthesis. Catalyzes the first committed step in the biosynthesis of AMP from IMP. The chain is Adenylosuccinate synthetase from Francisella tularensis subsp. tularensis (strain FSC 198).